Reading from the N-terminus, the 473-residue chain is Anthocyanidin-3-O-glucoside rhamnosyltransferase (473 aa).

This sequence belongs to the UDP-glycosyltransferase family. In terms of tissue distribution, expressed in petals, styles and anthers.

The protein operates within pigment biosynthesis; anthocyanin biosynthesis. Its function is as follows. Controls the rhamnosylation of reddish anthocyanidin-3-O-glucosides, which is the first step in a series of modifications that finally yield magenta or blue/purple coloured anthocyanins. Controls the conversion of anthocyanidin-3-O-glucosides to anthocyanidin-3-O-rutinosides. The sequence is that of Anthocyanidin-3-O-glucoside rhamnosyltransferase from Petunia hybrida (Petunia).